The following is a 279-amino-acid chain: Protease HtpX homolog (279 aa).

Helical transmembrane passes span V6–G26 and G29–S49. H130 contributes to the Zn(2+) binding site. The active site involves E131. H134 is a Zn(2+) binding site. A run of 2 helical transmembrane segments spans residues I145 to G165 and V176 to I196. Zn(2+) is bound at residue E201.

The protein belongs to the peptidase M48B family. It depends on Zn(2+) as a cofactor.

It is found in the cell inner membrane. This is Protease HtpX homolog from Gemmatimonas aurantiaca (strain DSM 14586 / JCM 11422 / NBRC 100505 / T-27).